A 37-amino-acid chain; its full sequence is Potassium channel toxin alpha-KTx 11.1 (37 aa).

Disulfide bonds link Cys-8-Cys-27, Cys-13-Cys-33, and Cys-17-Cys-35.

This sequence belongs to the short scorpion toxin superfamily. Potassium channel inhibitor family. Alpha-KTx 11 subfamily. In terms of tissue distribution, expressed by the venom gland.

The protein resides in the secreted. Functionally, binds and inhibits voltage-sensitive potassium channels. Inhibits the vertebrate potassium channels Kv1.1/KCNA1, Kv1.2/KCNA2 and Kv1.3/KCNA3 with low affinity. Also weakly inhibits Kv7.1/KCNQ1 (10 uM of the toxin inhibits currents by 21.43%). The chain is Potassium channel toxin alpha-KTx 11.1 from Parabuthus villosus (Black hairy thick-tailed scorpion).